We begin with the raw amino-acid sequence, 579 residues long: Arginine--tRNA ligase (579 aa).

The 'HIGH' region motif lies at 136-146 (ANPTGPLHIGH).

This sequence belongs to the class-I aminoacyl-tRNA synthetase family. In terms of assembly, monomer.

It localises to the cytoplasm. It carries out the reaction tRNA(Arg) + L-arginine + ATP = L-arginyl-tRNA(Arg) + AMP + diphosphate. The chain is Arginine--tRNA ligase from Anaplasma marginale (strain St. Maries).